The following is a 142-amino-acid chain: HTH-type transcriptional regulator MntR (142 aa).

Positions 1–63 (MTTPSMEDYI…YEKYRGLVLT (63 aa)) constitute an HTH dtxR-type domain. The Mn(2+) site is built by aspartate 8, glutamate 11, histidine 77, glutamate 99, glutamate 102, and histidine 103.

Belongs to the DtxR/MntR family. Homodimer.

The protein resides in the cytoplasm. DNA binding is strongly activated by Mn(2+). Central regulator of manganese homeostasis. The protein is HTH-type transcriptional regulator MntR of Bacillus velezensis (strain DSM 23117 / BGSC 10A6 / LMG 26770 / FZB42) (Bacillus amyloliquefaciens subsp. plantarum).